Consider the following 197-residue polypeptide: Phosphoheptose isomerase (197 aa).

The SIS domain occupies 34–196 (MVQCLLGGNK…DRTLFPQDEQ (163 aa)). 49–51 (NGG) provides a ligand contact to substrate. Histidine 58 and glutamate 62 together coordinate Zn(2+). Residues glutamate 62, 91 to 92 (ND), 117 to 119 (STS), serine 122, and glutamine 172 contribute to the substrate site. Zn(2+)-binding residues include glutamine 172 and histidine 180.

This sequence belongs to the SIS family. GmhA subfamily. In terms of assembly, homotetramer. Requires Zn(2+) as cofactor.

The protein resides in the cytoplasm. It carries out the reaction 2 D-sedoheptulose 7-phosphate = D-glycero-alpha-D-manno-heptose 7-phosphate + D-glycero-beta-D-manno-heptose 7-phosphate. It functions in the pathway carbohydrate biosynthesis; D-glycero-D-manno-heptose 7-phosphate biosynthesis; D-glycero-alpha-D-manno-heptose 7-phosphate and D-glycero-beta-D-manno-heptose 7-phosphate from sedoheptulose 7-phosphate: step 1/1. Catalyzes the isomerization of sedoheptulose 7-phosphate in D-glycero-D-manno-heptose 7-phosphate. The sequence is that of Phosphoheptose isomerase from Shewanella piezotolerans (strain WP3 / JCM 13877).